Here is a 405-residue protein sequence, read N- to C-terminus: GTPase Obg (405 aa).

Residues 1–159 (MRFIDEAVVT…KVLKFELKVV (159 aa)) form the Obg domain. The region spanning 160 to 333 (ADVGLIGLPN…IKYHLMNEIE (174 aa)) is the OBG-type G domain. Residues 166 to 173 (GLPNAGKS), 191 to 195 (FTTLV), 213 to 216 (DIPG), 283 to 286 (NKID), and 314 to 316 (ATL) each bind GTP. Mg(2+) is bound by residues S173 and T193. Over residues 371-382 (YRAARKAAREGT) the composition is skewed to basic and acidic residues. Residues 371-405 (YRAARKAAREGTDLSDDDFDGSDDDDDGVEVIYAP) form a disordered region. The segment covering 383–399 (DLSDDDFDGSDDDDDGV) has biased composition (acidic residues).

This sequence belongs to the TRAFAC class OBG-HflX-like GTPase superfamily. OBG GTPase family. As to quaternary structure, monomer. The cofactor is Mg(2+).

It localises to the cytoplasm. An essential GTPase which binds GTP, GDP and possibly (p)ppGpp with moderate affinity, with high nucleotide exchange rates and a fairly low GTP hydrolysis rate. Plays a role in control of the cell cycle, stress response, ribosome biogenesis and in those bacteria that undergo differentiation, in morphogenesis control. This is GTPase Obg from Psychrobacter arcticus (strain DSM 17307 / VKM B-2377 / 273-4).